Consider the following 207-residue polypeptide: Interferon kappa (207 aa).

An N-terminal signal peptide occupies residues 1–27; sequence MSTKPDMIQKCLWLEILMGIFIAGTLS. Cystine bridges form between Cys30–Cys128 and Cys59–Cys181. Positions 118-148 form a coiled coil; the sequence is LDQQAEYLNQCLEEDKNENEDMKEMKENEMK.

This sequence belongs to the alpha/beta interferon family. In terms of tissue distribution, expressed in keratinocytes, monocytes and in resting dendritic cells.

The protein resides in the secreted. Its function is as follows. May play a role in the regulation of immune cell function. Cytokine that imparts cellular protection against viral infection in a species-specific manner. Activates the interferon-stimulated response element signaling pathway. It is able to directly modulate cytokine release from monocytes and dendritic cells. Binds heparin. This Homo sapiens (Human) protein is Interferon kappa (IFNK).